The sequence spans 90 residues: Putative regulatory protein Cbei_1140 (90 aa).

Belongs to the RemA family.

The sequence is that of Putative regulatory protein Cbei_1140 from Clostridium beijerinckii (strain ATCC 51743 / NCIMB 8052) (Clostridium acetobutylicum).